The chain runs to 210 residues: N-(5'-phosphoribosyl)anthranilate isomerase (210 aa).

Belongs to the TrpF family.

It catalyses the reaction N-(5-phospho-beta-D-ribosyl)anthranilate = 1-(2-carboxyphenylamino)-1-deoxy-D-ribulose 5-phosphate. It functions in the pathway amino-acid biosynthesis; L-tryptophan biosynthesis; L-tryptophan from chorismate: step 3/5. This is N-(5'-phosphoribosyl)anthranilate isomerase from Crocosphaera subtropica (strain ATCC 51142 / BH68) (Cyanothece sp. (strain ATCC 51142)).